Here is a 1025-residue protein sequence, read N- to C-terminus: Exocyst complex component 6 (1025 aa).

2 stretches are compositionally biased toward basic and acidic residues: residues M1 to I10 and M22 to K52. Disordered regions lie at residues M1–L122, L135–K154, and Q666–E691. Residues L19 to A68 adopt a coiled-coil conformation. Over residues S71–D93 the composition is skewed to low complexity. Residues S104 to Q118 show a composition bias toward polar residues. 2 stretches are compositionally biased toward low complexity: residues L135 to S147 and Q666 to N677. Positions N678–E691 are enriched in acidic residues.

Belongs to the SEC15 family. As to quaternary structure, the exocyst complex is composed of sec3/exoc1, sec5/exoc2, sec6/exoc3, sec8/exoc4, sec10/exoc5, sec15/exoc6, exo70/exoc7 and exo84/exoc8.

Its subcellular location is the cytoplasm. It is found in the perinuclear region. It localises to the midbody. The protein resides in the midbody ring. Functionally, component of the exocyst complex involved in the docking of exocytic vesicles with fusion sites on the plasma membrane. This chain is Exocyst complex component 6 (exoc6), found in Dictyostelium discoideum (Social amoeba).